A 209-amino-acid chain; its full sequence is Uracil phosphoribosyltransferase (209 aa).

5-phospho-alpha-D-ribose 1-diphosphate is bound by residues Arg-79, Arg-104, and 131–139; that span reads DPMLATGGS. Uracil-binding positions include Ile-194 and 199-201; that span reads GDA. Asp-200 contacts 5-phospho-alpha-D-ribose 1-diphosphate.

This sequence belongs to the UPRTase family. Requires Mg(2+) as cofactor.

The catalysed reaction is UMP + diphosphate = 5-phospho-alpha-D-ribose 1-diphosphate + uracil. It participates in pyrimidine metabolism; UMP biosynthesis via salvage pathway; UMP from uracil: step 1/1. Its activity is regulated as follows. Allosterically activated by GTP. Its function is as follows. Catalyzes the conversion of uracil and 5-phospho-alpha-D-ribose 1-diphosphate (PRPP) to UMP and diphosphate. The sequence is that of Uracil phosphoribosyltransferase from Clostridium perfringens (strain SM101 / Type A).